The primary structure comprises 502 residues: Type II secretion system protein E (502 aa).

263–270 contributes to the ATP binding site; the sequence is GPTGSGKT. The Zn(2+) site is built by C396, C399, C429, and C432. Residues 461-480 are disordered; the sequence is SSEQEMTRHARTSGPSIRDD.

It belongs to the GSP E family. As to quaternary structure, homodimer. Dimerization is directed by a relatively short domain near the extreme N-terminus and is essential for extracellular protein secretion. May form homooligomers. Interacts with XcpY/GspL. Forms an inner membrane platform subcomplex with XcpS/GspF, XcpY/GspL and XcpZ/GspM. Zn(2+) is required as a cofactor.

It localises to the cell inner membrane. It catalyses the reaction ATP + H2O + cellular proteinSide 1 = ADP + phosphate + cellular proteinSide 2.. Functionally, ATPase component of the type II secretion system required for the energy-dependent secretion of extracellular factors such as proteases and toxins from the periplasm. Acts as a molecular motor to provide the energy that is required for assembly of the pseudopilus and the extrusion of substrates generated in the cytoplasm. The sequence is that of Type II secretion system protein E (xcpR) from Pseudomonas aeruginosa (strain ATCC 15692 / DSM 22644 / CIP 104116 / JCM 14847 / LMG 12228 / 1C / PRS 101 / PAO1).